Here is a 185-residue protein sequence, read N- to C-terminus: ATP-dependent protease subunit HslV (185 aa).

Residue T14 is part of the active site. The Na(+) site is built by A168, C171, and T174.

The protein belongs to the peptidase T1B family. HslV subfamily. A double ring-shaped homohexamer of HslV is capped on each side by a ring-shaped HslU homohexamer. The assembly of the HslU/HslV complex is dependent on binding of ATP.

The protein localises to the cytoplasm. It catalyses the reaction ATP-dependent cleavage of peptide bonds with broad specificity.. Allosterically activated by HslU binding. Protease subunit of a proteasome-like degradation complex believed to be a general protein degrading machinery. This is ATP-dependent protease subunit HslV from Hyphomonas neptunium (strain ATCC 15444).